The sequence spans 139 residues: Arsenate reductase (139 aa).

Active-site nucleophile residues include Cys-10, Cys-82, and Cys-89. 2 disulfide bridges follow: Cys-10–Cys-82 and Cys-82–Cys-89.

The protein belongs to the low molecular weight phosphotyrosine protein phosphatase family. Thioredoxin-coupled ArsC subfamily.

The protein resides in the cytoplasm. The catalysed reaction is arsenate + [thioredoxin]-dithiol + H(+) = arsenite + [thioredoxin]-disulfide + H2O. Functionally, catalyzes the reduction of arsenate [As(V)] to arsenite [As(III)]. The protein is Arsenate reductase of Halalkalibacterium halodurans (strain ATCC BAA-125 / DSM 18197 / FERM 7344 / JCM 9153 / C-125) (Bacillus halodurans).